We begin with the raw amino-acid sequence, 50 residues long: Protein hunchback (50 aa).

3 consecutive C2H2-type zinc fingers follow at residues 1 to 5 (HIRNH), 11 to 33 (FKCN…LKSH), and 39 to 50 (YRCADCAYATKY).

This sequence belongs to the hunchback C2H2-type zinc-finger protein family.

It is found in the nucleus. Functionally, gap class segmentation protein that controls development of head structures. The protein is Protein hunchback (hb) of Schultesia lampyridiformis (Firefly mimic roach).